Consider the following 229-residue polypeptide: Cytidylate kinase (229 aa).

10–18 contacts ATP; sequence GYSSCGKST.

It belongs to the cytidylate kinase family. Type 1 subfamily.

Its subcellular location is the cytoplasm. It catalyses the reaction CMP + ATP = CDP + ADP. It carries out the reaction dCMP + ATP = dCDP + ADP. The chain is Cytidylate kinase from Phocaeicola vulgatus (strain ATCC 8482 / DSM 1447 / JCM 5826 / CCUG 4940 / NBRC 14291 / NCTC 11154) (Bacteroides vulgatus).